We begin with the raw amino-acid sequence, 364 residues long: Putative protein C31H2.4 (364 aa).

VOC domains lie at 6 to 134 and 161 to 320; these read AIHH…LGEF and LMDH…IFSK. Fe cation contacts are provided by H164, H248, and E331.

This sequence belongs to the 4HPPD family. Fe cation is required as a cofactor.

This chain is Putative protein C31H2.4, found in Caenorhabditis elegans.